The chain runs to 938 residues: Isoleucine--tRNA ligase (938 aa).

A 'HIGH' region motif is present at residues 58–68 (PYANGNIHIGH). E563 contributes to the L-isoleucyl-5'-AMP binding site. A 'KMSKS' region motif is present at residues 604-608 (KMSKS). An ATP-binding site is contributed by K607. Zn(2+) contacts are provided by C903, C906, C921, and C924.

Belongs to the class-I aminoacyl-tRNA synthetase family. IleS type 1 subfamily. In terms of assembly, monomer. Zn(2+) serves as cofactor.

Its subcellular location is the cytoplasm. It carries out the reaction tRNA(Ile) + L-isoleucine + ATP = L-isoleucyl-tRNA(Ile) + AMP + diphosphate. In terms of biological role, catalyzes the attachment of isoleucine to tRNA(Ile). As IleRS can inadvertently accommodate and process structurally similar amino acids such as valine, to avoid such errors it has two additional distinct tRNA(Ile)-dependent editing activities. One activity is designated as 'pretransfer' editing and involves the hydrolysis of activated Val-AMP. The other activity is designated 'posttransfer' editing and involves deacylation of mischarged Val-tRNA(Ile). The sequence is that of Isoleucine--tRNA ligase from Buchnera aphidicola subsp. Schizaphis graminum (strain Sg).